Consider the following 239-residue polypeptide: tRNA (guanine-N(1)-)-methyltransferase (239 aa).

S-adenosyl-L-methionine is bound by residues G110 and 130–135; that span reads VGDYVL.

Belongs to the RNA methyltransferase TrmD family. In terms of assembly, homodimer.

The protein localises to the cytoplasm. It carries out the reaction guanosine(37) in tRNA + S-adenosyl-L-methionine = N(1)-methylguanosine(37) in tRNA + S-adenosyl-L-homocysteine + H(+). In terms of biological role, specifically methylates guanosine-37 in various tRNAs. This chain is tRNA (guanine-N(1)-)-methyltransferase, found in Borrelia turicatae (strain 91E135).